A 272-amino-acid polypeptide reads, in one-letter code: Glutamate racemase (272 aa).

Substrate is bound by residues 10–11 (DS) and 42–43 (YG). Residue Cys74 is the Proton donor/acceptor of the active site. 75–76 (NT) contacts substrate. The Proton donor/acceptor role is filled by Cys185. 186 to 187 (TH) provides a ligand contact to substrate.

This sequence belongs to the aspartate/glutamate racemases family.

The enzyme catalyses L-glutamate = D-glutamate. The protein operates within cell wall biogenesis; peptidoglycan biosynthesis. Provides the (R)-glutamate required for cell wall biosynthesis. The polypeptide is Glutamate racemase (Bacillus pumilus (strain SAFR-032)).